The sequence spans 217 residues: ATP-dependent Clp protease proteolytic subunit (217 aa).

Ser119 serves as the catalytic Nucleophile. The active site involves His144.

It belongs to the peptidase S14 family. Fourteen ClpP subunits assemble into 2 heptameric rings which stack back to back to give a disk-like structure with a central cavity, resembling the structure of eukaryotic proteasomes.

It is found in the cytoplasm. The catalysed reaction is Hydrolysis of proteins to small peptides in the presence of ATP and magnesium. alpha-casein is the usual test substrate. In the absence of ATP, only oligopeptides shorter than five residues are hydrolyzed (such as succinyl-Leu-Tyr-|-NHMec, and Leu-Tyr-Leu-|-Tyr-Trp, in which cleavage of the -Tyr-|-Leu- and -Tyr-|-Trp bonds also occurs).. Cleaves peptides in various proteins in a process that requires ATP hydrolysis. Has a chymotrypsin-like activity. Plays a major role in the degradation of misfolded proteins. In Bordetella petrii (strain ATCC BAA-461 / DSM 12804 / CCUG 43448), this protein is ATP-dependent Clp protease proteolytic subunit.